Consider the following 335-residue polypeptide: GTPase Obg (335 aa).

An Obg domain is found at 1 to 159 (MQFIDRSEIE…RKLLLELKLL (159 aa)). The 169-residue stretch at 160-328 (AEVGIIGLPN…LLARVWQVLE (169 aa)) folds into the OBG-type G domain. GTP-binding positions include 166–173 (GLPNAGKS), 191–195 (FTTLV), 213–216 (DIPG), 280–283 (NKAD), and 309–311 (SAA). 2 residues coordinate Mg(2+): serine 173 and threonine 193.

Belongs to the TRAFAC class OBG-HflX-like GTPase superfamily. OBG GTPase family. As to quaternary structure, monomer. The cofactor is Mg(2+).

It is found in the cytoplasm. Its function is as follows. An essential GTPase which binds GTP, GDP and possibly (p)ppGpp with moderate affinity, with high nucleotide exchange rates and a fairly low GTP hydrolysis rate. Plays a role in control of the cell cycle, stress response, ribosome biogenesis and in those bacteria that undergo differentiation, in morphogenesis control. This chain is GTPase Obg, found in Gloeobacter violaceus (strain ATCC 29082 / PCC 7421).